We begin with the raw amino-acid sequence, 100 residues long: Small ribosomal subunit protein uS14c (100 aa).

It belongs to the universal ribosomal protein uS14 family. In terms of assembly, part of the 30S ribosomal subunit.

It localises to the plastid. Its subcellular location is the chloroplast. Functionally, binds 16S rRNA, required for the assembly of 30S particles. This Nymphaea alba (White water-lily) protein is Small ribosomal subunit protein uS14c.